We begin with the raw amino-acid sequence, 311 residues long: Protoheme IX farnesyltransferase (311 aa).

8 helical membrane passes run 19 to 39, 55 to 75, 101 to 121, 123 to 143, 169 to 189, 221 to 241, 242 to 262, and 290 to 310; these read VLAY…VATI, ILAT…LNCV, NAFV…WWQA, LLSG…YTLG, AVTG…FFWT, VTKQ…ALVP, ATGV…LLMA, and VVFC…GSFF.

Belongs to the UbiA prenyltransferase family. Protoheme IX farnesyltransferase subfamily.

The protein localises to the cell membrane. The enzyme catalyses heme b + (2E,6E)-farnesyl diphosphate + H2O = Fe(II)-heme o + diphosphate. Its pathway is porphyrin-containing compound metabolism; heme O biosynthesis; heme O from protoheme: step 1/1. In terms of biological role, converts heme B (protoheme IX) to heme O by substitution of the vinyl group on carbon 2 of heme B porphyrin ring with a hydroxyethyl farnesyl side group. The protein is Protoheme IX farnesyltransferase of Nocardia farcinica (strain IFM 10152).